The primary structure comprises 260 residues: UPF0246 protein BPSL1241 (260 aa).

Belongs to the UPF0246 family.

The sequence is that of UPF0246 protein BPSL1241 from Burkholderia pseudomallei (strain K96243).